Consider the following 171-residue polypeptide: MAEKRNIFLVGPMGAGKSTIGRHLADELHLDFFDSDQEIERRTGADIAWIFDLEGEDGFRAREENVINDLTDKQGIVLATGGGSIVTKAVRNRLSARGIVVYLQTTIDKQVARTQRDKRRPLLQNEDPEQVLRDLAEMRNPLYEEVADYIVDTDDQSARAVANQIISKIGL.

Position 14–19 (14–19 (GAGKST)) interacts with ATP. Ser-18 lines the Mg(2+) pocket. Substrate-binding residues include Asp-36, Arg-60, and Gly-82. Arg-120 is a binding site for ATP. Arg-139 provides a ligand contact to substrate. Position 156 (Gln-156) interacts with ATP.

This sequence belongs to the shikimate kinase family. In terms of assembly, monomer. Mg(2+) serves as cofactor.

The protein resides in the cytoplasm. The enzyme catalyses shikimate + ATP = 3-phosphoshikimate + ADP + H(+). It functions in the pathway metabolic intermediate biosynthesis; chorismate biosynthesis; chorismate from D-erythrose 4-phosphate and phosphoenolpyruvate: step 5/7. Catalyzes the specific phosphorylation of the 3-hydroxyl group of shikimic acid using ATP as a cosubstrate. The protein is Shikimate kinase of Alteromonas mediterranea (strain DSM 17117 / CIP 110805 / LMG 28347 / Deep ecotype).